We begin with the raw amino-acid sequence, 481 residues long: Phosphoglucosamine mutase (481 aa).

Residue Ser128 is the Phosphoserine intermediate of the active site. Mg(2+) contacts are provided by Ser128, Asp269, Asp271, and Asp273. At Ser128 the chain carries Phosphoserine.

It belongs to the phosphohexose mutase family. Requires Mg(2+) as cofactor. Activated by phosphorylation.

The enzyme catalyses alpha-D-glucosamine 1-phosphate = D-glucosamine 6-phosphate. Its function is as follows. Catalyzes the conversion of glucosamine-6-phosphate to glucosamine-1-phosphate. This is Phosphoglucosamine mutase from Synechocystis sp. (strain ATCC 27184 / PCC 6803 / Kazusa).